The chain runs to 505 residues: Lysine--tRNA ligase (505 aa).

Positions 415 and 422 each coordinate Mg(2+).

Belongs to the class-II aminoacyl-tRNA synthetase family. Homodimer. Mg(2+) serves as cofactor.

The protein resides in the cytoplasm. The catalysed reaction is tRNA(Lys) + L-lysine + ATP = L-lysyl-tRNA(Lys) + AMP + diphosphate. The chain is Lysine--tRNA ligase from Salmonella arizonae (strain ATCC BAA-731 / CDC346-86 / RSK2980).